Here is a 659-residue protein sequence, read N- to C-terminus: MFQDNPLLAQLKQQIHDSKEQVEGVVKSTDKAYGFLECDKKTYFIAPPSMKKVMHGDKIKATIEKQGDKEQAEPESLIEPMLTRFIAKVRFNKDKKLQVLVDHPNINQPIGAQQAKSVKEELQEGDWVVANLKTHPLRDDRFFYATINQFICRAEDELAPWWVTLARHEQSRYPVRGAEPYEMLDQKTRENLTALHFVTIDSESTMDMDDALYIEPIAQNSTQTGWKLVVAIADPTAYIALDSQIEQEAKQRCFTNYLPGFNIPMLPRELSDELCSLIANETRPALVCYIETDLAGNITAKPNFVSAYVQSKAKLAYNKVSDYLEQADNAWQPEMPEIAQQIHWLHQFTKARIQWRKTHSLFFKEKPDYTFVLAENGKVQEIKAEYRRIANQIVEEAMIIANICAAQFLHEQAKTGIFNTHSGFDKKFLENAHNFLMANLANEQNQTELAERYSVENLATLNGYCQMRHDIEPIESDYLELRLRRYLTFAEFKSELAPHFGLGLEGYATWTSPIRKYSDMVNHRLIKAVLAKQPYEKPQNDVLARLQEARRQNRLVERDIADWLYCRYLADKVASNAEFEAEVQDVMRAGLRVQLLENGASLFIPAATLHNNKEEIQLNPDELALYIKGDRTYKIGDIVKVKLTEVKEATRSIVGEILQ.

In terms of domain architecture, RNB spans 189 to 531; the sequence is RENLTALHFV…NHRLIKAVLA (343 aa). The 83-residue stretch at 576 to 658 folds into the S1 motif domain; that stretch reads NAEFEAEVQD…ATRSIVGEIL (83 aa).

The protein belongs to the RNR ribonuclease family. RNase II subfamily.

The protein localises to the cytoplasm. It carries out the reaction Exonucleolytic cleavage in the 3'- to 5'-direction to yield nucleoside 5'-phosphates.. Its function is as follows. Involved in mRNA degradation. Hydrolyzes single-stranded polyribonucleotides processively in the 3' to 5' direction. In Haemophilus influenzae (strain PittGG), this protein is Exoribonuclease 2.